Consider the following 141-residue polypeptide: Putative pre-16S rRNA nuclease (141 aa).

The protein belongs to the YqgF nuclease family.

It is found in the cytoplasm. Functionally, could be a nuclease involved in processing of the 5'-end of pre-16S rRNA. The sequence is that of Putative pre-16S rRNA nuclease from Aliivibrio fischeri (strain MJ11) (Vibrio fischeri).